The primary structure comprises 421 residues: Large ribosomal subunit protein uL4 (421 aa).

Ala-2 is subject to N-acetylalanine. Residue Lys-14 is modified to N6-acetyllysine. Residue Arg-97 is modified to Omega-N-methylarginine. The residue at position 106 (Lys-106) is an N6-acetyllysine. Lys-239 participates in a covalent cross-link: Glycyl lysine isopeptide (Lys-Gly) (interchain with G-Cter in SUMO2). Lys-259 is modified (N6-acetyllysine). Residue Thr-266 is modified to Phosphothreonine. Ser-290 bears the Phosphoserine mark. A Citrulline modification is found at Arg-300. Lys-327 is covalently cross-linked (Glycyl lysine isopeptide (Lys-Gly) (interchain with G-Cter in SUMO2)). Lys-333 and Lys-353 each carry N6-acetyllysine. A disordered region spans residues 359–421; it reads EAKSEEKGVP…PTTEEKKPAA (63 aa). The residue at position 361 (Lys-361) is an N6-acetyllysine; alternate. Lys-361 participates in a covalent cross-link: Glycyl lysine isopeptide (Lys-Gly) (interchain with G-Cter in SUMO1); alternate. A Phosphoserine modification is found at Ser-362. A compositionally biased stretch (basic residues) spans 368–391; that stretch reads PGKKPRRKKGKKTVGVKKPKKPVV. The span at 401-421 shows a compositional bias: basic and acidic residues; it reads PAADKKPAEKKPTTEEKKPAA.

The protein belongs to the universal ribosomal protein uL4 family. Component of the large ribosomal subunit. May bind IPO9 with low affinity. Interacts with RBM3. Citrullinated by PADI4.

The protein localises to the cytoplasm. In terms of biological role, component of the large ribosomal subunit. The ribosome is a large ribonucleoprotein complex responsible for the synthesis of proteins in the cell. The chain is Large ribosomal subunit protein uL4 (RPL4) from Canis lupus familiaris (Dog).